A 627-amino-acid chain; its full sequence is Phosphomethylpyrimidine synthase (627 aa).

Residues 1–24 (MSATQKNNITRLEQLDRQSTQPFP) are compositionally biased toward polar residues. The tract at residues 1–29 (MSATQKNNITRLEQLDRQSTQPFPNSRKV) is disordered. Substrate-binding positions include Asn-231, Met-260, Tyr-289, His-325, 345–347 (SRG), 386–389 (DGLR), and Glu-425. Residue His-429 participates in Zn(2+) binding. Residue Tyr-452 participates in substrate binding. A Zn(2+)-binding site is contributed by His-493. Positions 573, 576, and 581 each coordinate [4Fe-4S] cluster.

The protein belongs to the ThiC family. In terms of assembly, homodimer. The cofactor is [4Fe-4S] cluster.

The enzyme catalyses 5-amino-1-(5-phospho-beta-D-ribosyl)imidazole + S-adenosyl-L-methionine = 4-amino-2-methyl-5-(phosphooxymethyl)pyrimidine + CO + 5'-deoxyadenosine + formate + L-methionine + 3 H(+). Its pathway is cofactor biosynthesis; thiamine diphosphate biosynthesis. Catalyzes the synthesis of the hydroxymethylpyrimidine phosphate (HMP-P) moiety of thiamine from aminoimidazole ribotide (AIR) in a radical S-adenosyl-L-methionine (SAM)-dependent reaction. The sequence is that of Phosphomethylpyrimidine synthase from Pseudomonas aeruginosa (strain LESB58).